The following is a 257-amino-acid chain: Ribosomal large subunit pseudouridine synthase B (257 aa).

Residues 3–63 form the S4 RNA-binding domain; that stretch reads AKIQKILSDL…KKKIIVKRNK (61 aa). Catalysis depends on D109, which acts as the Nucleophile.

The protein belongs to the pseudouridine synthase RsuA family.

The enzyme catalyses uridine(2605) in 23S rRNA = pseudouridine(2605) in 23S rRNA. Its function is as follows. Responsible for synthesis of pseudouridine from uracil-2605 in 23S ribosomal RNA. The protein is Ribosomal large subunit pseudouridine synthase B (rluB) of Buchnera aphidicola subsp. Schizaphis graminum (strain Sg).